Reading from the N-terminus, the 498-residue chain is ATP synthase subunit beta, chloroplastic (498 aa).

At Thr6 the chain carries Phosphothreonine. The residue at position 13 (Ser13) is a Phosphoserine. An ATP-binding site is contributed by 172-179 (GGAGVGKT).

The protein belongs to the ATPase alpha/beta chains family. F-type ATPases have 2 components, CF(1) - the catalytic core - and CF(0) - the membrane proton channel. CF(1) has five subunits: alpha(3), beta(3), gamma(1), delta(1), epsilon(1). CF(0) has four main subunits: a(1), b(1), b'(1) and c(9-12).

The protein resides in the plastid. The protein localises to the chloroplast thylakoid membrane. It catalyses the reaction ATP + H2O + 4 H(+)(in) = ADP + phosphate + 5 H(+)(out). In terms of biological role, produces ATP from ADP in the presence of a proton gradient across the membrane. The catalytic sites are hosted primarily by the beta subunits. The chain is ATP synthase subunit beta, chloroplastic from Olimarabidopsis pumila (Dwarf rocket).